The primary structure comprises 377 residues: Pseudouridylate synthase RPUSD4, mitochondrial (377 aa).

A mitochondrion-targeting transit peptide spans 1–35 (MAAPLLGSPGLQVLSMSSRTGKLFTPSSRSFCSRA). The active site involves Asp153.

It belongs to the pseudouridine synthase RluA family. In terms of assembly, interacts with 16S mt-rRNA, mt-tRNA(Phe) and mt-tRNA(Met). Forms a regulatory protein-RNA complex, consisting of RCC1L, NGRN, RPUSD3, RPUSD4, TRUB2, FASTKD2 and 16S mt-rRNA.

The protein resides in the mitochondrion matrix. The protein localises to the nucleus. Its subcellular location is the cytoplasm. The enzyme catalyses uridine in 5S rRNA = pseudouridine in 5S rRNA. It catalyses the reaction a uridine in tRNA = a pseudouridine in tRNA. It carries out the reaction a uridine in mRNA = a pseudouridine in mRNA. Catalyzes uridine to pseudouridine isomerization (pseudouridylation) of different mitochondrial RNA substrates. Acts on position 1397 in 16S mitochondrial ribosomal RNA (16S mt-rRNA). This modification is required for the assembly of 16S mt-rRNA into a functional mitochondrial ribosome. As a component of a functional protein-RNA module, consisting of RCC1L, NGRN, RPUSD3, RPUSD4, TRUB2, FASTKD2 and 16S mt-rRNA, controls 16S mt-rRNA abundance and is required for intra-mitochondrial translation. Acts on position 39 in mitochondrial tRNA(Phe). Also catalyzes pseudouridylation of mRNAs in nucleus: acts as a regulator of pre-mRNA splicing by mediating pseudouridylation of pre-mRNAs at locations associated with alternatively spliced regions. Pseudouridylation of pre-mRNAs near splice sites directly regulates mRNA splicing and mRNA 3'-end processing. The protein is Pseudouridylate synthase RPUSD4, mitochondrial of Rattus norvegicus (Rat).